Consider the following 294-residue polypeptide: Acetylglutamate kinase (294 aa).

Substrate-binding positions include 47–48, arginine 69, and asparagine 168; that span reads GG.

The protein belongs to the acetylglutamate kinase family. ArgB subfamily.

The protein resides in the cytoplasm. The enzyme catalyses N-acetyl-L-glutamate + ATP = N-acetyl-L-glutamyl 5-phosphate + ADP. It participates in amino-acid biosynthesis; L-arginine biosynthesis; N(2)-acetyl-L-ornithine from L-glutamate: step 2/4. In terms of biological role, catalyzes the ATP-dependent phosphorylation of N-acetyl-L-glutamate. The chain is Acetylglutamate kinase from Corynebacterium glutamicum (strain ATCC 13032 / DSM 20300 / JCM 1318 / BCRC 11384 / CCUG 27702 / LMG 3730 / NBRC 12168 / NCIMB 10025 / NRRL B-2784 / 534).